Here is a 595-residue protein sequence, read N- to C-terminus: Actin-histidine N-methyltransferase (595 aa).

A disordered region spans residues 1–22 (MGKKSRVKTQKSGTGATATVSP). A compositionally biased stretch (polar residues) spans 10-20 (QKSGTGATATV). Residues R75, 104-106 (EGF), R254, 275-279 (DMCNH), and 325-327 (SGF) each bind S-adenosyl-L-methionine. Positions 94–314 (EGFEMVNFKE…AGEQIYIFYG (221 aa)) constitute an SET domain. At S513 the chain carries Phosphoserine. The segment covering 549–563 (ENGLVNGENSIPNGT) has biased composition (polar residues). Positions 549-595 (ENGLVNGENSIPNGTRSEDENLNQEESKRAVEDAKGSSSDRADAVKE) are disordered. Basic and acidic residues predominate over residues 573 to 595 (EESKRAVEDAKGSSSDRADAVKE).

This sequence belongs to the class V-like SAM-binding methyltransferase superfamily. SETD3 actin-histidine methyltransferase family. In terms of assembly, interacts with MYOD1. Phosphorylated by GSK3B, which is required for recognition by the SCF(FBXW7) complex and subsequent degradation. Post-translationally, ubiquitinated by the SCF(FBXW7) complex following phosphorylation by GSK3B, leading to its degradation by the proteasome.

It localises to the cytoplasm. It is found in the nucleus. The catalysed reaction is L-histidyl-[protein] + S-adenosyl-L-methionine = N(tele)-methyl-L-histidyl-[protein] + S-adenosyl-L-homocysteine + H(+). Protein-histidine N-methyltransferase that specifically mediates 3-methylhistidine (tele-methylhistidine) methylation of actin at 'His-73'. Histidine methylation of actin is required for smooth muscle contraction of the laboring uterus during delivery. Does not have protein-lysine N-methyltransferase activity and probably only catalyzes histidine methylation of actin. In Callithrix jacchus (White-tufted-ear marmoset), this protein is Actin-histidine N-methyltransferase.